A 160-amino-acid chain; its full sequence is Small ribosomal subunit protein uS7 (160 aa).

This sequence belongs to the universal ribosomal protein uS7 family. In terms of assembly, part of the 30S ribosomal subunit. Contacts proteins S9 and S11.

In terms of biological role, one of the primary rRNA binding proteins, it binds directly to 16S rRNA where it nucleates assembly of the head domain of the 30S subunit. Is located at the subunit interface close to the decoding center, probably blocks exit of the E-site tRNA. This is Small ribosomal subunit protein uS7 from Rickettsia prowazekii (strain Madrid E).